The chain runs to 98 residues: NADH-ubiquinone oxidoreductase chain 4L (98 aa).

Helical transmembrane passes span M1–I21, S28–I48, and A59–V79.

This sequence belongs to the complex I subunit 4L family. In terms of assembly, core subunit of respiratory chain NADH dehydrogenase (Complex I) which is composed of 45 different subunits.

It localises to the mitochondrion inner membrane. It catalyses the reaction a ubiquinone + NADH + 5 H(+)(in) = a ubiquinol + NAD(+) + 4 H(+)(out). Its function is as follows. Core subunit of the mitochondrial membrane respiratory chain NADH dehydrogenase (Complex I) which catalyzes electron transfer from NADH through the respiratory chain, using ubiquinone as an electron acceptor. Part of the enzyme membrane arm which is embedded in the lipid bilayer and involved in proton translocation. The sequence is that of NADH-ubiquinone oxidoreductase chain 4L (MT-ND4L) from Perameles gunnii (Eastern barred bandicoot).